The following is a 313-amino-acid chain: Beta-ketoacyl-[acyl-carrier-protein] synthase III (313 aa).

Catalysis depends on residues C112 and H238. The segment at 239–243 (QANIR) is ACP-binding. Residue N268 is part of the active site.

The protein belongs to the thiolase-like superfamily. FabH family. In terms of assembly, homodimer.

Its subcellular location is the cytoplasm. The catalysed reaction is malonyl-[ACP] + acetyl-CoA + H(+) = 3-oxobutanoyl-[ACP] + CO2 + CoA. Its pathway is lipid metabolism; fatty acid biosynthesis. Its function is as follows. Catalyzes the condensation reaction of fatty acid synthesis by the addition to an acyl acceptor of two carbons from malonyl-ACP. Catalyzes the first condensation reaction which initiates fatty acid synthesis and may therefore play a role in governing the total rate of fatty acid production. Possesses both acetoacetyl-ACP synthase and acetyl transacylase activities. Its substrate specificity determines the biosynthesis of branched-chain and/or straight-chain of fatty acids. The polypeptide is Beta-ketoacyl-[acyl-carrier-protein] synthase III (Staphylococcus aureus (strain bovine RF122 / ET3-1)).